Consider the following 435-residue polypeptide: 5'-deoxyadenosine deaminase (435 aa).

Zn(2+) contacts are provided by H64 and H66. E93 and H185 together coordinate substrate. Position 212 (H212) interacts with Zn(2+). Positions 215 and 300 each coordinate substrate. Residue D300 coordinates Zn(2+).

The protein belongs to the metallo-dependent hydrolases superfamily. MTA/SAH deaminase family. In terms of assembly, homotetramer. Requires Zn(2+) as cofactor.

It catalyses the reaction 5'-deoxyadenosine + H2O + H(+) = 5'-deoxyinosine + NH4(+). The enzyme catalyses S-adenosyl-L-homocysteine + H2O + H(+) = S-inosyl-L-homocysteine + NH4(+). It carries out the reaction S-methyl-5'-thioadenosine + H2O + H(+) = S-methyl-5'-thioinosine + NH4(+). The catalysed reaction is adenosine + H2O + H(+) = inosine + NH4(+). It participates in amino-acid biosynthesis; S-adenosyl-L-methionine biosynthesis. Its function is as follows. Catalyzes the deamination of three SAM-derived enzymatic products, namely 5'-deoxyadenosine, S-adenosyl-L-homocysteine, and 5'-methylthioadenosine, to produce the inosine analogs. Can also deaminate adenosine. The preferred substrate for this enzyme is 5'-deoxyadenosine, but all these substrates are efficiently deaminated. Likely functions in a S-adenosyl-L-methionine (SAM) recycling pathway from S-adenosyl-L-homocysteine (SAH) produced from SAM-dependent methylation reactions. May also be involved in the recycling of 5'-deoxyadenosine, whereupon the 5'-deoxyribose moiety of 5'-deoxyinosine is further metabolized to deoxyhexoses used for the biosynthesis of aromatic amino acids in methanogens. The sequence is that of 5'-deoxyadenosine deaminase from Methanobrevibacter smithii (strain ATCC 35061 / DSM 861 / OCM 144 / PS).